The chain runs to 339 residues: Serpentine receptor class alpha-21 (339 aa).

Transmembrane regions (helical) follow at residues 30–50 (FNFLFITTVILLSYCFTWLAI), 150–170 (FIAVSLLVLQLLLTLVSFYIA), 199–219 (VRTVVMVCCLVVTGFIYYLSV), 250–270 (ILIVLKLFCNMLSSIGINLLL), and 282–302 (VLVALFLPGVTYANLCLPLVI).

Belongs to the nematode receptor-like protein sra family.

The protein localises to the membrane. The chain is Serpentine receptor class alpha-21 (sra-21) from Caenorhabditis elegans.